The primary structure comprises 629 residues: Bifunctional protein ArgHA (629 aa).

The tract at residues 1-499 (MALWGGRFSQ…NLPRSRSDLV (499 aa)) is argininosuccinate lyase. The N-acetyltransferase domain occupies 464 to 598 (ISIRAARLTD…EKVLKDCDMC (135 aa)). The segment at 500 to 629 (KAVGTFAVTE…INLKAEKLAS (130 aa)) is amino-acid acetyltransferase.

In the N-terminal section; belongs to the lyase 1 family. Argininosuccinate lyase subfamily. This sequence in the C-terminal section; belongs to the acetyltransferase family. ArgA subfamily.

The protein resides in the cytoplasm. It catalyses the reaction 2-(N(omega)-L-arginino)succinate = fumarate + L-arginine. The enzyme catalyses L-glutamate + acetyl-CoA = N-acetyl-L-glutamate + CoA + H(+). It participates in amino-acid biosynthesis; L-arginine biosynthesis; N(2)-acetyl-L-ornithine from L-glutamate: step 1/4. The protein operates within amino-acid biosynthesis; L-arginine biosynthesis; L-arginine from L-ornithine and carbamoyl phosphate: step 3/3. In Moritella abyssi, this protein is Bifunctional protein ArgHA (argHA).